The primary structure comprises 171 residues: MPGTAEVQVRPGVEEDLKPLTDLYNHYVRETPITFDTEPFTPEERRPWLLSHPEDGPYRLRVATDAESQEILGYATSSPYRAKPAYATSVETTVYVAPGAGGRGIGSLLYASLFDALAAEDLHRAYAGIAQPNEASARLHARFGFRHVGTYREVGRKFGRYWDVAWYERPL.

In terms of domain architecture, N-acetyltransferase spans 7–171; it reads VQVRPGVEED…WDVAWYERPL (165 aa). Acetyl-CoA contacts are provided by residues 94–96, 102–107, and Asn-133; these read VYV and GRGIGS.

It belongs to the acetyltransferase family. PAT/BAR subfamily.

The catalysed reaction is phosphinothricin + acetyl-CoA = N-acetylphosphinothricin + CoA + H(+). Its function is as follows. Inactivates phosphinothricin (PPT) by transfer of an acetyl group from acetyl CoA. The physiological substrate could be a structurally related compound. The protein is Phosphinothricin N-acetyltransferase of Streptomyces coelicolor (strain ATCC BAA-471 / A3(2) / M145).